The primary structure comprises 546 residues: Chaperonin GroEL (546 aa).

ATP is bound by residues Thr30–Pro33, Lys51, Asp87–Thr91, Gly415, and Asp496. The disordered stretch occupies residues Pro526–Met546. Positions Gly534–Met546 are enriched in gly residues.

This sequence belongs to the chaperonin (HSP60) family. In terms of assembly, forms a cylinder of 14 subunits composed of two heptameric rings stacked back-to-back. Interacts with the co-chaperonin GroES.

It localises to the cytoplasm. The catalysed reaction is ATP + H2O + a folded polypeptide = ADP + phosphate + an unfolded polypeptide.. In terms of biological role, together with its co-chaperonin GroES, plays an essential role in assisting protein folding. The GroEL-GroES system forms a nano-cage that allows encapsulation of the non-native substrate proteins and provides a physical environment optimized to promote and accelerate protein folding. The chain is Chaperonin GroEL from Rhodopseudomonas palustris.